The primary structure comprises 438 residues: GDP-mannose 6-dehydrogenase (438 aa).

NAD(+)-binding residues include tyrosine 10, valine 11, aspartate 30, lysine 35, threonine 86, and threonine 124. The GDP-alpha-D-mannuronate site is built by glutamate 161, lysine 210, asparagine 214, histidine 217, asparagine 225, tyrosine 256, tyrosine 257, arginine 259, phenylalanine 262, and glycine 265. Cysteine 268 is an active-site residue. NAD(+) is bound at residue lysine 271. Residue lysine 324 participates in GDP-alpha-D-mannuronate binding. Residue arginine 331 participates in NAD(+) binding.

It belongs to the UDP-glucose/GDP-mannose dehydrogenase family.

The catalysed reaction is GDP-alpha-D-mannose + 2 NAD(+) + H2O = GDP-alpha-D-mannuronate + 2 NADH + 3 H(+). Its pathway is glycan biosynthesis; alginate biosynthesis. In terms of biological role, catalyzes the oxidation of guanosine diphospho-D-mannose (GDP-D-mannose) to GDP-D-mannuronic acid, a precursor for alginate polymerization. The alginate layer causes a mucoid phenotype and provides a protective barrier against host immune defenses and antibiotics. The protein is GDP-mannose 6-dehydrogenase (algD) of Pseudomonas savastanoi pv. phaseolicola (Pseudomonas syringae pv. phaseolicola).